The following is a 337-amino-acid chain: Ornithine carbamoyltransferase, catabolic (337 aa).

Residues 57–60, Q84, R108, and 135–138 contribute to the carbamoyl phosphate site; these read STRT and HPTQ. Residues N167, D231, and 235–236 contribute to the L-ornithine site; that span reads SM. Carbamoyl phosphate is bound by residues 272–273 and R317; that span reads CL.

The protein belongs to the aspartate/ornithine carbamoyltransferase superfamily. OTCase family.

It localises to the cytoplasm. It carries out the reaction carbamoyl phosphate + L-ornithine = L-citrulline + phosphate + H(+). It functions in the pathway amino-acid degradation; L-arginine degradation via ADI pathway; carbamoyl phosphate from L-arginine: step 2/2. Functionally, reversibly catalyzes the transfer of the carbamoyl group from carbamoyl phosphate (CP) to the N(epsilon) atom of ornithine (ORN) to produce L-citrulline. This Streptococcus ratti protein is Ornithine carbamoyltransferase, catabolic.